Here is a 269-residue protein sequence, read N- to C-terminus: Trans-aconitate 2-methyltransferase (269 aa).

Belongs to the methyltransferase superfamily. Tam family.

The protein localises to the cytoplasm. The enzyme catalyses trans-aconitate + S-adenosyl-L-methionine = (E)-3-(methoxycarbonyl)pent-2-enedioate + S-adenosyl-L-homocysteine. Its function is as follows. Catalyzes the S-adenosylmethionine monomethyl esterification of trans-aconitate. In Streptomyces avermitilis (strain ATCC 31267 / DSM 46492 / JCM 5070 / NBRC 14893 / NCIMB 12804 / NRRL 8165 / MA-4680), this protein is Trans-aconitate 2-methyltransferase.